The chain runs to 127 residues: Protein ApaG (127 aa).

The ApaG domain maps to 3–127; sequence NDQKYDIKVQ…FILSVPRVLH (125 aa).

The protein is Protein ApaG of Nitrosomonas eutropha (strain DSM 101675 / C91 / Nm57).